A 122-amino-acid chain; its full sequence is MARLAGVDLPRNKRMEVALTYIYGIGPARAAQLLEETGISPDLRTDNLTDEQVSALRDVIEATWKVEGDLRRQVQADIRRKIEIGCYQGLRHRRGLPVRGQRTKTNARTRKGPKKTIAGKKK.

The disordered stretch occupies residues 95–122 (GLPVRGQRTKTNARTRKGPKKTIAGKKK).

This sequence belongs to the universal ribosomal protein uS13 family. In terms of assembly, part of the 30S ribosomal subunit. Forms a loose heterodimer with protein S19. Forms two bridges to the 50S subunit in the 70S ribosome.

Its function is as follows. Located at the top of the head of the 30S subunit, it contacts several helices of the 16S rRNA. In the 70S ribosome it contacts the 23S rRNA (bridge B1a) and protein L5 of the 50S subunit (bridge B1b), connecting the 2 subunits; these bridges are implicated in subunit movement. Contacts the tRNAs in the A and P-sites. The chain is Small ribosomal subunit protein uS13 from Corynebacterium diphtheriae (strain ATCC 700971 / NCTC 13129 / Biotype gravis).